A 246-amino-acid chain; its full sequence is Auxin-responsive protein IAA11 (246 aa).

The EAR-like (transcriptional repression) motif lies at 36 to 40 (LGLTL). A PB1 domain is found at 136–235 (SMFVKVTMDG…SVRRLRIMKT (100 aa)).

Belongs to the Aux/IAA family. As to quaternary structure, homodimers and heterodimers. Interacts with TPL. In terms of tissue distribution, preferentially expressed in stems and flowers.

The protein resides in the nucleus. Its function is as follows. Aux/IAA proteins are short-lived transcriptional factors that function as repressors of early auxin response genes at low auxin concentrations. Repression is thought to result from the interaction with auxin response factors (ARFs), proteins that bind to the auxin-responsive promoter element (AuxRE). Formation of heterodimers with ARF proteins may alter their ability to modulate early auxin response genes expression. The protein is Auxin-responsive protein IAA11 (IAA11) of Arabidopsis thaliana (Mouse-ear cress).